The chain runs to 462 residues: Argininosuccinate lyase (462 aa).

Belongs to the lyase 1 family. Argininosuccinate lyase subfamily.

Its subcellular location is the cytoplasm. It catalyses the reaction 2-(N(omega)-L-arginino)succinate = fumarate + L-arginine. It functions in the pathway amino-acid biosynthesis; L-arginine biosynthesis; L-arginine from L-ornithine and carbamoyl phosphate: step 3/3. The chain is Argininosuccinate lyase from Bacillus cereus (strain B4264).